We begin with the raw amino-acid sequence, 238 residues long: Tyrosine recombinase XerD-like (238 aa).

The Core-binding (CB) domain maps to 1–75 (MKLPNEIDEY…SANQYLLFLY (75 aa)). The region spanning 90-238 (VQKKSQTAQS…TITTLEKYYR (149 aa)) is the Tyr recombinase domain. Active-site residues include Lys-154 and Arg-204. Tyr-236 (O-(3'-phospho-DNA)-tyrosine intermediate) is an active-site residue.

This sequence belongs to the 'phage' integrase family. XerD-like subfamily.

It is found in the cytoplasm. In terms of biological role, putative tyrosine recombinase. Not involved in the cutting and rejoining of the recombining DNA molecules on dif(SL) site. The chain is Tyrosine recombinase XerD-like (ynbA) from Lactococcus lactis subsp. lactis (strain IL1403) (Streptococcus lactis).